The chain runs to 292 residues: MATLKDIRTRIKGVKSTQQVTKAMKMVAAAKLRRAQESAVQARPYAAKLKEMLGSLSTKVDTSLNPMLSARDEVGRVLVVLITSDRGLCGAFNTNIIKVAQKVMTVDHADLHKSGKVDLICAGSKGYDFFRKRDYRILKGYPGVFQNLDFSVAKEIAEQASGMYLRGEVDKVVVVYNEFKSVLAPNLKSEVLLPITPEGSGDEGGSDYIYEPSPASIIDVLVPKHLNTQVWRMMLESNAAEQAARMAAMDSATENAKELLRLLNISYNRARQAAITTELSEIVAGAEALQGT.

It belongs to the ATPase gamma chain family. F-type ATPases have 2 components, CF(1) - the catalytic core - and CF(0) - the membrane proton channel. CF(1) has five subunits: alpha(3), beta(3), gamma(1), delta(1), epsilon(1). CF(0) has three main subunits: a, b and c.

It localises to the cell membrane. Functionally, produces ATP from ADP in the presence of a proton gradient across the membrane. The gamma chain is believed to be important in regulating ATPase activity and the flow of protons through the CF(0) complex. This Prosthecochloris aestuarii (strain DSM 271 / SK 413) protein is ATP synthase gamma chain.